Consider the following 461-residue polypeptide: Thyroid hormone receptor beta (461 aa).

The tract at residues 1–24 (MTPNSMTENGLPAWDKQKPRPDRG) is disordered. The interval 1–106 (MTPNSMTENG…IPSYLDKDEL (106 aa)) is modulating. Over residues 15 to 24 (DKQKPRPDRG) the composition is skewed to basic and acidic residues. Zn(2+)-binding residues include Cys-107, Cys-110, Cys-124, Cys-127, Cys-145, Cys-151, Cys-161, and Cys-164. NR C4-type zinc fingers lie at residues 107–127 (CVVCGDKATGYHYRCITCEGC) and 145–169 (CKYEGKCIIDKVTRNQCQECRFKKC). Residues 107–181 (CVVCGDKATG…VGMATDLVLD (75 aa)) constitute a DNA-binding region (nuclear receptor). Residues 217–461 (EEWELIKTVT…PPLFLEVFED (245 aa)) form the NR LBD domain. Residues 244–461 (KFLPEDIGQA…PPLFLEVFED (218 aa)) are interaction with NR2F6. The 3,3',5-triiodo-L-thyronine site is built by Arg-282, Asn-331, and His-435. The L-thyroxine site is built by Arg-282, Asn-331, and His-435.

The protein belongs to the nuclear hormone receptor family. NR1 subfamily. As to quaternary structure, binds DNA as a dimer; homodimer and heterodimer with RXRB. Interacts with the coactivators NCOA1/SRC1, NCOA2/GRIP1, NCOA7 and MED1/TRAP220 in a ligand-inducible manner. Interacts with the corepressor NCOR1 in absence of ligand. Interacts with C1D. Interacts with NR2F6; the interaction impairs the binding of the THRB homodimer and THRB:RXRB heterodimer to T3 response elements. Interacts with PRMT2 and THRSP. Interacts with TACC1; this interaction is decreased in the presence of thyroid hormone T3.

It is found in the nucleus. In terms of biological role, nuclear hormone receptor that can act as a repressor or activator of transcription. High affinity receptor for thyroid hormones, including triiodothyronine and thyroxine. In Mus musculus (Mouse), this protein is Thyroid hormone receptor beta (Thrb).